A 304-amino-acid polypeptide reads, in one-letter code: Ribosomal RNA large subunit methyltransferase F (304 aa).

This sequence belongs to the methyltransferase superfamily. METTL16/RlmF family.

The protein localises to the cytoplasm. It carries out the reaction adenosine(1618) in 23S rRNA + S-adenosyl-L-methionine = N(6)-methyladenosine(1618) in 23S rRNA + S-adenosyl-L-homocysteine + H(+). In terms of biological role, specifically methylates the adenine in position 1618 of 23S rRNA. The protein is Ribosomal RNA large subunit methyltransferase F of Klebsiella pneumoniae (strain 342).